The sequence spans 614 residues: UvrABC system protein C (614 aa).

The GIY-YIG domain maps to 16-94; the sequence is SRPGVYRMFG…VKSLKPRFNV (79 aa). Residues 204-239 enclose the UVR domain; it reads GELQKRLASEMEAASEAMEFETAARLRDRIRAIAHV.

It belongs to the UvrC family. Interacts with UvrB in an incision complex.

Its subcellular location is the cytoplasm. Functionally, the UvrABC repair system catalyzes the recognition and processing of DNA lesions. UvrC both incises the 5' and 3' sides of the lesion. The N-terminal half is responsible for the 3' incision and the C-terminal half is responsible for the 5' incision. This chain is UvrABC system protein C, found in Hyphomonas neptunium (strain ATCC 15444).